A 513-amino-acid polypeptide reads, in one-letter code: Cytochrome P450 1A2 (513 aa).

The O-linked (GlcNAc) serine glycan is linked to Ser-68. Phe-225 is a substrate binding site. Cys-456 is a heme binding site.

The protein belongs to the cytochrome P450 family. As to quaternary structure, interacts with PGRMC1; the interaction requires PGRMC1 homodimerization. Requires heme as cofactor.

It localises to the endoplasmic reticulum membrane. The protein localises to the microsome membrane. The catalysed reaction is an organic molecule + reduced [NADPH--hemoprotein reductase] + O2 = an alcohol + oxidized [NADPH--hemoprotein reductase] + H2O + H(+). It carries out the reaction 17beta-estradiol + reduced [NADPH--hemoprotein reductase] + O2 = 2-hydroxy-17beta-estradiol + oxidized [NADPH--hemoprotein reductase] + H2O + H(+). The enzyme catalyses 17beta-estradiol + reduced [NADPH--hemoprotein reductase] + O2 = 4-hydroxy-17beta-estradiol + oxidized [NADPH--hemoprotein reductase] + H2O + H(+). It catalyses the reaction estrone + reduced [NADPH--hemoprotein reductase] + O2 = 2-hydroxyestrone + oxidized [NADPH--hemoprotein reductase] + H2O + H(+). The catalysed reaction is estrone + reduced [NADPH--hemoprotein reductase] + O2 = 4-hydroxyestrone + oxidized [NADPH--hemoprotein reductase] + H2O + H(+). It carries out the reaction cholesterol + reduced [NADPH--hemoprotein reductase] + O2 = 25-hydroxycholesterol + oxidized [NADPH--hemoprotein reductase] + H2O + H(+). The enzyme catalyses all-trans-retinol + reduced [NADPH--hemoprotein reductase] + O2 = all-trans-retinal + oxidized [NADPH--hemoprotein reductase] + 2 H2O + H(+). It catalyses the reaction all-trans-retinal + reduced [NADPH--hemoprotein reductase] + O2 = all-trans-retinoate + oxidized [NADPH--hemoprotein reductase] + H2O + 2 H(+). The catalysed reaction is (5Z,8Z,11Z,14Z)-eicosatetraenoate + reduced [NADPH--hemoprotein reductase] + O2 = (14R,15S)-epoxy-(5Z,8Z,11Z)-eicosatrienoate + oxidized [NADPH--hemoprotein reductase] + H2O + H(+). It carries out the reaction (5Z,8Z,11Z,14Z)-eicosatetraenoate + reduced [NADPH--hemoprotein reductase] + O2 = (14S,15R)-epoxy-(5Z,8Z,11Z)-eicosatrienoate + oxidized [NADPH--hemoprotein reductase] + H2O + H(+). The enzyme catalyses (5Z,8Z,11Z,14Z,17Z)-eicosapentaenoate + reduced [NADPH--hemoprotein reductase] + O2 = (17R,18S)-epoxy-(5Z,8Z,11Z,14Z)-eicosatetraenoate + oxidized [NADPH--hemoprotein reductase] + H2O + H(+). It catalyses the reaction (4Z,7Z,10Z,13Z,16Z,19Z)-docosahexaenoate + reduced [NADPH--hemoprotein reductase] + O2 = (19R,20S)-epoxy-(4Z,7Z,10Z,13Z,16Z)-docosapentaenoate + oxidized [NADPH--hemoprotein reductase] + H2O + H(+). The catalysed reaction is (5S)-hydroperoxy-(6E,8Z,11Z,14Z)-eicosatetraenoate = 5-oxo-(6E,8Z,11Z,14Z)-eicosatetraenoate + H2O. It carries out the reaction (12S)-hydroperoxy-(5Z,8Z,10E,14Z)-eicosatetraenoate = 12-oxo-(5Z,8Z,10E,14Z)-eicosatetraenoate + H2O. The enzyme catalyses (15S)-hydroperoxy-(5Z,8Z,11Z,13E)-eicosatetraenoate = 15-oxo-(5Z,8Z,11Z,13E)-eicosatetraenoate + H2O. It catalyses the reaction (13S)-hydroperoxy-(9Z,11E)-octadecadienoate = 13-oxo-(9Z,11E)-octadecadienoate + H2O. The catalysed reaction is (5Z,8Z,11Z,14Z)-eicosatetraenoate + reduced [NADPH--hemoprotein reductase] + O2 = 13-hydroxy-(5Z,8Z,11Z,14Z)-eicosatetraenoate + oxidized [NADPH--hemoprotein reductase] + H2O + H(+). It carries out the reaction (5Z,8Z,11Z,14Z)-eicosatetraenoate + reduced [NADPH--hemoprotein reductase] + O2 = 19-hydroxy-(5Z,8Z,11Z,14Z)-eicosatetraenoate + oxidized [NADPH--hemoprotein reductase] + H2O + H(+). The enzyme catalyses (9Z,12Z)-octadecadienoate + reduced [NADPH--hemoprotein reductase] + O2 = 11-hydroxy-(9Z,12Z)-octadecadienoate + oxidized [NADPH--hemoprotein reductase] + H2O + H(+). It functions in the pathway cofactor metabolism; retinol metabolism. Its pathway is steroid metabolism; cholesterol metabolism. It participates in lipid metabolism; arachidonate metabolism. Functionally, a cytochrome P450 monooxygenase involved in the metabolism of various endogenous substrates, including fatty acids, steroid hormones and vitamins. Mechanistically, uses molecular oxygen inserting one oxygen atom into a substrate, and reducing the second into a water molecule, with two electrons provided by NADPH via cytochrome P450 reductase (NADPH--hemoprotein reductase). Catalyzes the hydroxylation of carbon-hydrogen bonds. Exhibits high catalytic activity for the formation of hydroxyestrogens from estrone (E1) and 17beta-estradiol (E2), namely 2-hydroxy E1 and E2. Metabolizes cholesterol toward 25-hydroxycholesterol, a physiological regulator of cellular cholesterol homeostasis. May act as a major enzyme for all-trans retinoic acid biosynthesis in the liver. Catalyzes two successive oxidative transformation of all-trans retinol to all-trans retinal and then to the active form all-trans retinoic acid. Primarily catalyzes stereoselective epoxidation of the last double bond of polyunsaturated fatty acids (PUFA), displaying a strong preference for the (R,S) stereoisomer. Catalyzes bisallylic hydroxylation and omega-1 hydroxylation of PUFA. May also participate in eicosanoids metabolism by converting hydroperoxide species into oxo metabolites (lipoxygenase-like reaction, NADPH-independent). Plays a role in the oxidative metabolism of xenobiotics. Catalyzes the N-hydroxylation of heterocyclic amines and the O-deethylation of phenacetin. Metabolizes caffeine via N3-demethylation. The protein is Cytochrome P450 1A2 (Cyp1a2) of Mus musculus (Mouse).